The chain runs to 266 residues: Norfluorocurarine synthase 1 (266 aa).

The region spanning 11–121 (HFVLVHGAGH…VMPDAVNPPS (111 aa)) is the AB hydrolase-1 domain. Residues serine 86, aspartate 216, and histidine 244 contribute to the active site.

This sequence belongs to the AB hydrolase superfamily. In terms of assembly, homodimer.

The catalysed reaction is 17-dehydropreakuammicine + H2O = norfluorocurarine + methanol + CO2. It functions in the pathway alkaloid biosynthesis. Functionally, hydrolase involved in the biosynthesis of curare monoterpene indole alkaloids (MIAs), natural products such as diaboline, a pharmacologically active compound used to regulate blood pressure. Curare alkaloids act as animal glycine receptor antagonists. Catalyzes the conversion of dehydropreakuammicine to norfluorocurarine. The sequence is that of Norfluorocurarine synthase 1 from Strychnos sp.